A 238-amino-acid chain; its full sequence is 15,16-dihydrobiliverdin:ferredoxin oxidoreductase (238 aa).

It belongs to the HY2 family.

It carries out the reaction 15,16-dihydrobiliverdin + oxidized 2[4Fe-4S]-[ferredoxin] = biliverdin IXalpha + reduced 2[4Fe-4S]-[ferredoxin] + 2 H(+). In terms of biological role, catalyzes the two-electron reduction of biliverdin IX-alpha at the C15 methine bridge. This is 15,16-dihydrobiliverdin:ferredoxin oxidoreductase from Prochlorococcus marinus (strain NATL2A).